The following is a 419-amino-acid chain: Serine hydroxymethyltransferase (419 aa).

(6S)-5,6,7,8-tetrahydrofolate is bound by residues Leu-121 and 125 to 127 (GHL). Lys-229 is subject to N6-(pyridoxal phosphate)lysine.

The protein belongs to the SHMT family. As to quaternary structure, homodimer. It depends on pyridoxal 5'-phosphate as a cofactor.

The protein resides in the cytoplasm. It carries out the reaction (6R)-5,10-methylene-5,6,7,8-tetrahydrofolate + glycine + H2O = (6S)-5,6,7,8-tetrahydrofolate + L-serine. It functions in the pathway one-carbon metabolism; tetrahydrofolate interconversion. It participates in amino-acid biosynthesis; glycine biosynthesis; glycine from L-serine: step 1/1. Catalyzes the reversible interconversion of serine and glycine with tetrahydrofolate (THF) serving as the one-carbon carrier. This reaction serves as the major source of one-carbon groups required for the biosynthesis of purines, thymidylate, methionine, and other important biomolecules. Also exhibits THF-independent aldolase activity toward beta-hydroxyamino acids, producing glycine and aldehydes, via a retro-aldol mechanism. The sequence is that of Serine hydroxymethyltransferase from Streptomyces griseus subsp. griseus (strain JCM 4626 / CBS 651.72 / NBRC 13350 / KCC S-0626 / ISP 5235).